A 240-amino-acid polypeptide reads, in one-letter code: Ribonuclease PH (240 aa).

Residues arginine 87 and 125-127 contribute to the phosphate site; that span reads GTR.

Belongs to the RNase PH family. Homohexameric ring arranged as a trimer of dimers.

The catalysed reaction is tRNA(n+1) + phosphate = tRNA(n) + a ribonucleoside 5'-diphosphate. Functionally, phosphorolytic 3'-5' exoribonuclease that plays an important role in tRNA 3'-end maturation. Removes nucleotide residues following the 3'-CCA terminus of tRNAs; can also add nucleotides to the ends of RNA molecules by using nucleoside diphosphates as substrates, but this may not be physiologically important. Probably plays a role in initiation of 16S rRNA degradation (leading to ribosome degradation) during starvation. The polypeptide is Ribonuclease PH (Pseudomonas syringae pv. tomato (strain ATCC BAA-871 / DC3000)).